A 286-amino-acid chain; its full sequence is MAWNLAIITLVGKDGTKLEATLRRENRGLMCLGNGWKDLSISNGLKSGKSFTLELILENGTPMLSLVSTQSTSHKSQKRECSKHSEKESISAVPSKGKKNRKARSNREERRDSSSAIQNRFVTFTPEDIRDCILILPSQFIKANGINNLGEITLLGQNRMKWFAYLLSMSKDGSLALGSGWKGICEANGVNTGEAFTLEYIDEQETAHGRAQVCFYGVFPGKSVRSFASLRSKWNDLFYDFLREQNLRVNPIIGVAICLCKHHYCNYNSCSLFKPRPKLSQKNLNS.

The segment at residues 1–70 is a DNA-binding region (TF-B3 1); it reads MAWNLAIITL…TPMLSLVSTQ (70 aa). A disordered region spans residues 68 to 114; sequence STQSTSHKSQKRECSKHSEKESISAVPSKGKKNRKARSNREERRDSS. The span at 78-89 shows a compositional bias: basic and acidic residues; sequence KRECSKHSEKES. A DNA-binding region (TF-B3 2) is located at residues 119 to 219; the sequence is NRFVTFTPED…RAQVCFYGVF (101 aa).

The protein resides in the nucleus. The sequence is that of B3 domain-containing protein REM11 (REM11) from Arabidopsis thaliana (Mouse-ear cress).